The sequence spans 99 residues: Leydig cell tumor 10 kDa protein homolog (99 aa).

The disordered stretch occupies residues 1-36 (MAQGQRKFQAHKPAKSKTAAAASEKNRGPRKGGRVI).

Belongs to the UPF0390 family.

Functionally, may have a potential role in hypercalcemia of malignancy. The sequence is that of Leydig cell tumor 10 kDa protein homolog (C19orf53) from Homo sapiens (Human).